A 30-amino-acid polypeptide reads, in one-letter code: Phospholipase A2 acanmyotoxin-2 (30 aa).

Ca(2+) contacts are provided by Tyr28 and Gly30.

It depends on Ca(2+) as a cofactor. In terms of processing, contains seven disulfide bonds. In terms of tissue distribution, expressed by the venom gland.

It is found in the secreted. It carries out the reaction a 1,2-diacyl-sn-glycero-3-phosphocholine + H2O = a 1-acyl-sn-glycero-3-phosphocholine + a fatty acid + H(+). In terms of biological role, snake venom phospholipase A2 (PLA2) that has myotoxic activity but no significant neurotoxicity. PLA2 catalyzes the calcium-dependent hydrolysis of the 2-acyl groups in 3-sn-phosphoglycerides. The polypeptide is Phospholipase A2 acanmyotoxin-2 (Acanthophis sp. (strain Seram) (Seram death adder)).